The sequence spans 368 residues: Probable replication factor C subunit 5 (368 aa).

69–76 serves as a coordination point for ATP; it reads GPPGTGKT.

It belongs to the activator 1 small subunits family. Heteropentamer of various rfc subunits that forms a complex (RFC) with PCNA in the presence of ATP.

It is found in the nucleus. Functionally, the elongation of primed DNA templates by DNA polymerase delta and epsilon requires the action of the accessory proteins proliferating cell nuclear antigen (PCNA) and activator 1. The protein is Probable replication factor C subunit 5 of Caenorhabditis elegans.